Here is a 446-residue protein sequence, read N- to C-terminus: Protein odr-4 homolog (446 aa).

The next 2 helical transmembrane spans lie at 81-101 and 424-444; these read MLPG…ELSK and MGVV…FNYF.

Belongs to the ODR-4 family.

It is found in the membrane. Functionally, may play a role in the trafficking of a subset of G-protein coupled receptors. This chain is Protein odr-4 homolog (ODR4), found in Gallus gallus (Chicken).